A 206-amino-acid chain; its full sequence is Probable chemoreceptor glutamine deamidase CheD (206 aa).

The protein belongs to the CheD family.

The catalysed reaction is L-glutaminyl-[protein] + H2O = L-glutamyl-[protein] + NH4(+). Probably deamidates glutamine residues to glutamate on methyl-accepting chemotaxis receptors (MCPs), playing an important role in chemotaxis. The polypeptide is Probable chemoreceptor glutamine deamidase CheD (Laribacter hongkongensis (strain HLHK9)).